The sequence spans 360 residues: Capsular polysaccharide phosphotransferase LcbA (360 aa).

This sequence belongs to the stealth family.

In terms of biological role, part of a group II capsule biosynthesis locus. This Aeromonas hydrophila protein is Capsular polysaccharide phosphotransferase LcbA (lcbA).